Reading from the N-terminus, the 210-residue chain is Large ribosomal subunit protein bL25 (210 aa).

The protein belongs to the bacterial ribosomal protein bL25 family. CTC subfamily. As to quaternary structure, part of the 50S ribosomal subunit; part of the 5S rRNA/L5/L18/L25 subcomplex. Contacts the 5S rRNA. Binds to the 5S rRNA independently of L5 and L18.

Functionally, this is one of the proteins that binds to the 5S RNA in the ribosome where it forms part of the central protuberance. The protein is Large ribosomal subunit protein bL25 of Herminiimonas arsenicoxydans.